A 253-amino-acid polypeptide reads, in one-letter code: Maleate isomerase (253 aa).

Residues Asn14, 80-82, Tyr137, and Asn167 contribute to the substrate site; that span reads CLV. Cys80 (nucleophile) is an active-site residue. Cys80 bears the S-(2-succinyl)cysteine mark. Cys198 serves as the catalytic Proton donor. 199 to 200 serves as a coordination point for substrate; that stretch reads VQ.

This sequence belongs to the maleate isomerase family. Homodimer.

The enzyme catalyses maleate = fumarate. Its function is as follows. Catalyzes cis-trans isomerization of the C2-C3 double bond in maleate to yield fumarate. The polypeptide is Maleate isomerase (Alcaligenes faecalis).